The sequence spans 296 residues: 4-hydroxybenzoate octaprenyltransferase (296 aa).

Transmembrane regions (helical) follow at residues 29-49, 52-72, 102-122, 146-166, 169-189, 219-239, 241-261, and 275-295; these read IGVY…GKGA, LQTV…GCVI, ALVL…FTNA, YYPQ…AFTA, GELP…TVGY, VIIL…GARF, LGAC…WEFW, and FLHN…DYAV.

Belongs to the UbiA prenyltransferase family. It depends on Mg(2+) as a cofactor.

It localises to the cell inner membrane. It catalyses the reaction all-trans-octaprenyl diphosphate + 4-hydroxybenzoate = 4-hydroxy-3-(all-trans-octaprenyl)benzoate + diphosphate. Its pathway is cofactor biosynthesis; ubiquinone biosynthesis. Functionally, catalyzes the prenylation of para-hydroxybenzoate (PHB) with an all-trans polyprenyl group. Mediates the second step in the final reaction sequence of ubiquinone-8 (UQ-8) biosynthesis, which is the condensation of the polyisoprenoid side chain with PHB, generating the first membrane-bound Q intermediate 3-octaprenyl-4-hydroxybenzoate. This Pseudomonas syringae pv. syringae (strain B728a) protein is 4-hydroxybenzoate octaprenyltransferase.